A 793-amino-acid chain; its full sequence is Netrin-B (793 aa).

Positions 1–22 (MVRATGTRMGLLLPIILALAIG) are cleaved as a signal peptide. In terms of domain architecture, Laminin N-terminal spans 39–303 (KPRKCLPSFV…NLQDNDSADA (265 aa)). N-linked (GlcNAc...) asparagine glycans are attached at residues Asn-103, Asn-125, and Asn-298. The disordered stretch occupies residues 332–378 (SVVKRQGKHKGSAYEKHYQSKLAATTPPQQPPKVTPPGKVTPPSTAA). Positions 367-378 (PPGKVTPPSTAA) are enriched in low complexity. 15 disulfides stabilise this stretch: Cys-405–Cys-414, Cys-407–Cys-461, Cys-463–Cys-472, Cys-475–Cys-495, Cys-498–Cys-507, Cys-500–Cys-525, Cys-528–Cys-537, Cys-540–Cys-558, Cys-561–Cys-573, Cys-563–Cys-580, Cys-582–Cys-591, Cys-594–Cys-608, Cys-649–Cys-738, Cys-652–Cys-740, and Cys-665–Cys-792. 3 Laminin EGF-like domains span residues 405 to 497 (CKCN…ECKM), 498 to 560 (CQCN…VCKR), and 561 to 610 (CDCH…PCIK). Positions 420–446 (SGSGTALSDQDDGQDEDTPSAPSLANH) are disordered. The span at 428-437 (DQDDGQDEDT) shows a compositional bias: acidic residues. The 144-residue stretch at 649 to 792 (CGKCKASPKK…KRFQRRARKC (144 aa)) folds into the NTR domain. The N-linked (GlcNAc...) asparagine glycan is linked to Asn-746.

In terms of assembly, binds to unc-5 and fra receptors. At 24 hr after puparium formation (APF), detected in the most anterior (oldest) L3, L4 and L5 lamina neurons (at protein level). At 48 hr APF, expressed in all L3, L4 and L5 neurons with slightly higher expression in the L3 neurons (at protein level). At the midline of developing CNS and in different subsets of neurons, muscles, and epidermal patches.

The protein resides in the secreted. Its subcellular location is the extracellular space. It localises to the extracellular matrix. It is found in the cytoplasm. The protein localises to the perinuclear region. Netrins control guidance of CNS commissural axons and peripheral motor axons. Its association with either fra or unc-5 receptors will lead to axon attraction or repulsion, respectively. While short-range repulsion requires both fra and unc-5 receptors, long-range repulsion only requires unc-5. This is Netrin-B (NetB) from Drosophila melanogaster (Fruit fly).